We begin with the raw amino-acid sequence, 900 residues long: Serine-rich coiled-coil domain-containing protein 1 (900 aa).

Disordered regions lie at residues 1–100 (MGDS…HSNM) and 156–178 (KSEG…QSTR). Residues 29–56 (LPSSPSSSNTVGVHSSSPSSTNSSSGST) show a composition bias toward low complexity. The span at 81 to 100 (EPTNQNLSISNGAQPGHSNM) shows a compositional bias: polar residues. The stretch at 673 to 707 (MKDECSMLKLQLKEKDELISQLQEELGKVRHLQKA) forms a coiled coil.

This sequence belongs to the CCSER family.

The chain is Serine-rich coiled-coil domain-containing protein 1 (CCSER1) from Homo sapiens (Human).